A 307-amino-acid polypeptide reads, in one-letter code: Follistatin-related protein 1 (307 aa).

Positions 1 to 19 (MMWRRWLALALVAVAWVHA) are cleaved as a signal peptide. Residues 29–52 (ICANVFCGAGRECAVTEKGEPTCL) enclose the Follistatin-like domain. Cystine bridges form between Cys-30–Cys-41, Cys-35–Cys-51, Cys-53–Cys-83, Cys-57–Cys-76, and Cys-65–Cys-97. The Kazal-like domain occupies 47–99 (GEPTCLCIEQCKPHKRPVCGSNGKTYLNHCELHRDACLTGSKIQVDYDGHCKE). The N-linked (GlcNAc...) asparagine glycan is linked to Asn-143. The 35-residue stretch at 143–177 (NYSEILDKYFKNFDNGDSRLDSSEFLKFVEQNETA) folds into the EF-hand 1 domain. At Ser-164 the chain carries Phosphoserine. 2 N-linked (GlcNAc...) asparagine glycosylation sites follow: Asn-174 and Asn-179. One can recognise an EF-hand 2 domain in the interval 192-227 (LRGLCVDALIELSDENADWKLSFQEFLKCLNPSFNP). A VWFC domain is found at 232–286 (CALEDETYADGAETEVDCNRCVCACGNWVCTAMTCDGKNQKGAQTQAEEEMTRYV).

In terms of assembly, homodimer. Interacts with SCN10A. Interacts with DIP2A; DIP2A may act as a cell surface receptor for FSTL1. Interacts with BMP4. Interacts with CD14; this interaction promotes TL4-mediated signaling cascade.

Its subcellular location is the secreted. Secreted glycoprotein that is involved in various physiological processes, such as angiogenesis, regulation of the immune response, cell proliferation and differentiation. Plays a role in the development of the central nervous system, skeletal system, lungs, and ureter. Promotes endothelial cell survival, migration and differentiation into network structures in an AKT-dependent manner. Also promotes survival of cardiac myocytes. Initiates various signaling cascades by activating different receptors on the cell surface such as DIP2A, TLR4 or BMP receptors. The polypeptide is Follistatin-related protein 1 (FSTL1) (Bos taurus (Bovine)).